Reading from the N-terminus, the 119-residue chain is Hisactophilin-3 (119 aa).

Gly2 carries the N-myristoyl glycine lipid modification. The segment at 8–110 is contains several HHXH repeats; sequence SHHGHFLSAE…SIYTTHHHHH (103 aa). Tandem repeats lie at residues 34-47 and 75-87. Residues 34 to 87 are 2 X 13 AA approximate repeats; the sequence is FHVENHGHHKVAIRTHANKYVSINDNNDVYISHHFHGEHSLFHLEHHGGKVSIK.

This sequence belongs to the hisactophilin family. In terms of processing, phosphorylated.

Its subcellular location is the cytoplasm. It localises to the cell membrane. Functionally, may act as an intracellular pH sensor that links chemotactic signals to responses in the microfilament system of the cells by nucleating actin polymerization or stabilizing the filaments. The chain is Hisactophilin-3 (hatC) from Dictyostelium discoideum (Social amoeba).